Here is a 251-residue protein sequence, read N- to C-terminus: Small ribosomal subunit protein uS2 (251 aa).

Residues 232–251 (EAIAEMDEQVEEDAEEASND) are disordered.

This sequence belongs to the universal ribosomal protein uS2 family.

The chain is Small ribosomal subunit protein uS2 from Chlorobaculum parvum (strain DSM 263 / NCIMB 8327) (Chlorobium vibrioforme subsp. thiosulfatophilum).